The following is a 104-amino-acid chain: Nucleoid-associated protein LSL_1227 (104 aa).

The segment covering 1-19 (MMMRGMNMQSMMKQMQKLQ) has biased composition (low complexity). The tract at residues 1-24 (MMMRGMNMQSMMKQMQKLQKNMKK) is disordered.

This sequence belongs to the YbaB/EbfC family. In terms of assembly, homodimer.

The protein resides in the cytoplasm. The protein localises to the nucleoid. Binds to DNA and alters its conformation. May be involved in regulation of gene expression, nucleoid organization and DNA protection. This is Nucleoid-associated protein LSL_1227 from Ligilactobacillus salivarius (strain UCC118) (Lactobacillus salivarius).